The following is a 380-amino-acid chain: Cytochrome b (380 aa).

4 consecutive transmembrane segments (helical) span residues 34-54 (SGSL…FLAM), 78-99 (WFLR…YCHI), 114-134 (WNVG…GYVL), and 179-199 (FFPF…IHLV). The heme b site is built by H84 and H98. Heme b contacts are provided by H183 and H197. H202 contributes to the a ubiquinone binding site. 4 helical membrane-spanning segments follow: residues 227 to 247 (TKDT…ALLF), 289 to 309 (LGGV…PLLN), 321 to 341 (LSQA…WIGS), and 348 to 369 (YVLL…GFPI).

This sequence belongs to the cytochrome b family. The main subunits of complex b-c1 are: cytochrome b, cytochrome c1 and the Rieske protein. Heme b is required as a cofactor.

The protein resides in the mitochondrion inner membrane. Functionally, component of the ubiquinol-cytochrome c reductase complex (complex III or cytochrome b-c1 complex) that is part of the mitochondrial respiratory chain. The b-c1 complex mediates electron transfer from ubiquinol to cytochrome c. Contributes to the generation of a proton gradient across the mitochondrial membrane that is then used for ATP synthesis. This chain is Cytochrome b (MT-CYB), found in Strongylocentrotus purpuratus (Purple sea urchin).